The primary structure comprises 226 residues: 2-C-methyl-D-erythritol 4-phosphate cytidylyltransferase (226 aa).

Belongs to the IspD/TarI cytidylyltransferase family. IspD subfamily.

It carries out the reaction 2-C-methyl-D-erythritol 4-phosphate + CTP + H(+) = 4-CDP-2-C-methyl-D-erythritol + diphosphate. It functions in the pathway isoprenoid biosynthesis; isopentenyl diphosphate biosynthesis via DXP pathway; isopentenyl diphosphate from 1-deoxy-D-xylulose 5-phosphate: step 2/6. Functionally, catalyzes the formation of 4-diphosphocytidyl-2-C-methyl-D-erythritol from CTP and 2-C-methyl-D-erythritol 4-phosphate (MEP). The polypeptide is 2-C-methyl-D-erythritol 4-phosphate cytidylyltransferase (Parasynechococcus marenigrum (strain WH8102)).